The sequence spans 196 residues: MPQAQIRKTQRNPKLWIAALVAASIVTISYKVYSSYIAEENIEDKKTEGDGGVEEKLRIAKRYTKKSIALTLSHSVLSSQLPLNEILLNSENVTFILPPNLSMDDLVCNIGNADEVERYNLPKTLLNNYKLLHCSNIDGYFNILKNLKPDTLLVCSEDLGIANNVPRDLHRFVKEIINIDQNKDDIYKKLSSIFIK.

A helical transmembrane segment spans residues 15–37; the sequence is LWIAALVAASIVTISYKVYSSYI.

This sequence belongs to the peroxin-22 family.

The protein localises to the peroxisome membrane. Its function is as follows. Involved in peroxisome biogenesis. The chain is Peroxisome assembly protein 22 (PEX22) from Debaryomyces hansenii (strain ATCC 36239 / CBS 767 / BCRC 21394 / JCM 1990 / NBRC 0083 / IGC 2968) (Yeast).